Consider the following 404-residue polypeptide: Formate-dependent phosphoribosylglycinamide formyltransferase (404 aa).

N(1)-(5-phospho-beta-D-ribosyl)glycinamide is bound by residues 25–26 (EL) and Glu85. ATP is bound by residues Arg118, Lys159, 164–169 (SSGKGQ), 199–202 (EGFI), and Glu207. The region spanning 123 to 318 (RLAAEELGLP…EFELHARAIL (196 aa)) is the ATP-grasp domain. Mg(2+) contacts are provided by Glu277 and Glu289. Residues Asp296, Lys365, and 372 to 373 (RR) contribute to the N(1)-(5-phospho-beta-D-ribosyl)glycinamide site.

The protein belongs to the PurK/PurT family. As to quaternary structure, homodimer.

The enzyme catalyses N(1)-(5-phospho-beta-D-ribosyl)glycinamide + formate + ATP = N(2)-formyl-N(1)-(5-phospho-beta-D-ribosyl)glycinamide + ADP + phosphate + H(+). The protein operates within purine metabolism; IMP biosynthesis via de novo pathway; N(2)-formyl-N(1)-(5-phospho-D-ribosyl)glycinamide from N(1)-(5-phospho-D-ribosyl)glycinamide (formate route): step 1/1. In terms of biological role, involved in the de novo purine biosynthesis. Catalyzes the transfer of formate to 5-phospho-ribosyl-glycinamide (GAR), producing 5-phospho-ribosyl-N-formylglycinamide (FGAR). Formate is provided by PurU via hydrolysis of 10-formyl-tetrahydrofolate. The sequence is that of Formate-dependent phosphoribosylglycinamide formyltransferase from Burkholderia pseudomallei (strain 668).